The sequence spans 288 residues: GCN5-related N-acetyltransferase 6, chloroplastic (288 aa).

The transit peptide at 1–111 (MSTISIHRTE…YWTAAWLRAE (111 aa)) directs the protein to the chloroplast. The N-acetyltransferase domain occupies 151–288 (SCIVAVKKEE…DDTYLLQYTS (138 aa)). Acetyl-CoA-binding positions include 215–217 (LCV), 223–228 (RQGIAC), 254–256 (NSV), and Tyr-261. Residue Tyr-261 is the Proton donor of the active site.

Belongs to the acetyltransferase family. GNAT subfamily. In terms of assembly, oligomer. Post-translationally, autoacetylated. As to expression, expressed in green tissues and in roots.

The protein localises to the plastid. It is found in the chloroplast. Its subcellular location is the cytoplasm. The protein resides in the perinuclear region. It catalyses the reaction an N-terminal L-alpha-aminoacyl-[protein] + acetyl-CoA = N-terminal N(alpha)-acetyl-L-alpha-aminoacyl-[protein] + CoA + H(+). It carries out the reaction L-lysyl-[protein] + acetyl-CoA = N(6)-acetyl-L-lysyl-[protein] + CoA + H(+). The enzyme catalyses N-terminal L-alanyl-[protein] + acetyl-CoA = N-terminal N(alpha)-acetyl-L-alanyl-[protein] + CoA + H(+). The catalysed reaction is N-terminal L-seryl-[protein] + acetyl-CoA = N-terminal N(alpha)-acetyl-L-seryl-[protein] + CoA + H(+). It catalyses the reaction N-terminal L-threonyl-[protein] + acetyl-CoA = N-terminal N(alpha)-acetyl-L-threonyl-[protein] + CoA + H(+). It carries out the reaction N-terminal L-methionyl-[protein] + acetyl-CoA = N-terminal N(alpha)-acetyl-L-methionyl-[protein] + CoA + H(+). The enzyme catalyses N-terminal L-valyl-[protein] + acetyl-CoA = N-terminal N(alpha)-acetyl-L-valyl-[protein] + CoA + H(+). In terms of biological role, protein acetyltransferase with dual specificity triggering both N-alpha-acetylation (NTA), with a large spectrum of modified N-termini, including methionine, alanine, serine, threonine and to a lower extent valine as substrates, and epsilon-lysine acetylation (KA). The protein is GCN5-related N-acetyltransferase 6, chloroplastic of Arabidopsis thaliana (Mouse-ear cress).